A 511-amino-acid polypeptide reads, in one-letter code: Ribonuclease Y (511 aa).

The helical transmembrane segment at 3-23 threads the bilayer; sequence VGILIGIIILGVVGFIQYTLI. The region spanning 201–286 is the KH domain; that stretch reads TVHVVALPND…EMVERAIKDV (86 aa). An HD domain is found at 327-420; the sequence is VLKHSIEVSY…VQAADAISAA (94 aa).

It belongs to the RNase Y family.

Its subcellular location is the cell membrane. Its function is as follows. Endoribonuclease that initiates mRNA decay. The polypeptide is Ribonuclease Y (Clostridium perfringens (strain ATCC 13124 / DSM 756 / JCM 1290 / NCIMB 6125 / NCTC 8237 / Type A)).